A 372-amino-acid polypeptide reads, in one-letter code: Pre-small/secreted glycoprotein (372 aa).

A signal peptide spans M1–S32. An N-linked (GlcNAc...) asparagine; by host glycan is attached at N40. 2 cysteine pairs are disulfide-bonded: C108-C135 and C121-C147. 5 N-linked (GlcNAc...) asparagine; by host glycosylation sites follow: N204, N208, N238, N257, and N268. The interval M320–R340 is disordered.

The protein belongs to the filoviruses glycoprotein family. As to quaternary structure, homodimer; disulfide-linked. The homodimers are linked by two disulfide bonds in a parallel orientation. In terms of assembly, monomer. This precursor is processed into mature sGP and delta-peptide by host furin or furin-like proteases. The cleavage site corresponds to the furin optimal cleavage sequence [KR]-X-[KR]-R. Post-translationally, N-glycosylated. In terms of processing, O-glycosylated.

The protein localises to the secreted. Its function is as follows. Seems to possess an anti-inflammatory activity as it can reverse the barrier-decreasing effects of TNF alpha. Might therefore contribute to the lack of inflammatory reaction seen during infection in spite the of extensive necrosis and massive virus production. Does not seem to be involved in activation of primary macrophages. Does not seem to interact specifically with neutrophils. Viroporin that permeabilizes mammalian cell plasma membranes. It acts by altering permeation of ionic compounds and small molecules. This activity may lead to viral enterotoxic activity. This is Pre-small/secreted glycoprotein (GP) from Sudan ebolavirus (strain Boniface-76) (SEBOV).